The primary structure comprises 348 residues: Protein RecA (348 aa).

An ATP-binding site is contributed by 66-73 (GPESSGKT).

This sequence belongs to the RecA family.

The protein resides in the cytoplasm. Functionally, can catalyze the hydrolysis of ATP in the presence of single-stranded DNA, the ATP-dependent uptake of single-stranded DNA by duplex DNA, and the ATP-dependent hybridization of homologous single-stranded DNAs. It interacts with LexA causing its activation and leading to its autocatalytic cleavage. The sequence is that of Protein RecA from Legionella pneumophila (strain Paris).